Here is a 262-residue protein sequence, read N- to C-terminus: Nurim (262 aa).

Residues methionine 1 to alanine 4 lie on the Nuclear side of the membrane. Residues leucine 5 to phenylalanine 28 form a helical membrane-spanning segment. At threonine 29–serine 58 the chain is on the perinuclear space side. A helical transmembrane segment spans residues isoleucine 59–methionine 80. Topologically, residues alanine 81 to glutamine 97 are nuclear. Residues arginine 98–arginine 114 form a helical membrane-spanning segment. The Perinuclear space segment spans residues tyrosine 115–tryptophan 133. A helical transmembrane segment spans residues alanine 134 to leucine 164. The Nuclear portion of the chain corresponds to methionine 165–leucine 191. The chain crosses the membrane as a helical span at residues phenylalanine 192–valine 210. The Perinuclear space segment spans residues proline 211–aspartate 216. A helical membrane pass occupies residues arginine 217–leucine 234. The Nuclear segment spans residues aspartate 235–glutamate 262.

This sequence belongs to the nurim family.

The protein localises to the nucleus inner membrane. The protein is Nurim (NRM) of Pan troglodytes (Chimpanzee).